We begin with the raw amino-acid sequence, 577 residues long: Sulfite reductase [NADPH] hemoprotein beta-component (577 aa).

Residues Cys436, Cys442, Cys481, and Cys485 each contribute to the [4Fe-4S] cluster site. Cys485 contributes to the siroheme binding site.

It belongs to the nitrite and sulfite reductase 4Fe-4S domain family. Alpha(8)-beta(8). The alpha component is a flavoprotein, the beta component is a hemoprotein. It depends on siroheme as a cofactor. The cofactor is [4Fe-4S] cluster.

The catalysed reaction is hydrogen sulfide + 3 NADP(+) + 3 H2O = sulfite + 3 NADPH + 4 H(+). The protein operates within sulfur metabolism; hydrogen sulfide biosynthesis; hydrogen sulfide from sulfite (NADPH route): step 1/1. Component of the sulfite reductase complex that catalyzes the 6-electron reduction of sulfite to sulfide. This is one of several activities required for the biosynthesis of L-cysteine from sulfate. The polypeptide is Sulfite reductase [NADPH] hemoprotein beta-component (Shewanella woodyi (strain ATCC 51908 / MS32)).